Reading from the N-terminus, the 59-residue chain is Large ribosomal subunit protein uL30 (59 aa).

Belongs to the universal ribosomal protein uL30 family. Part of the 50S ribosomal subunit.

The sequence is that of Large ribosomal subunit protein uL30 from Sulfurihydrogenibium sp. (strain YO3AOP1).